A 105-amino-acid chain; its full sequence is Met repressor (105 aa).

It belongs to the MetJ family. As to quaternary structure, homodimer.

It is found in the cytoplasm. Functionally, this regulatory protein, when combined with SAM (S-adenosylmethionine) represses the expression of the methionine regulon and of enzymes involved in SAM synthesis. The sequence is that of Met repressor from Haemophilus influenzae (strain PittEE).